We begin with the raw amino-acid sequence, 667 residues long: DNA ligase (667 aa).

Residues 34–38 (DSEYD), 83–84 (SL), and glutamate 112 each bind NAD(+). Residue lysine 114 is the N6-AMP-lysine intermediate of the active site. 4 residues coordinate NAD(+): arginine 135, glutamate 169, lysine 285, and lysine 309. 4 residues coordinate Zn(2+): cysteine 403, cysteine 406, cysteine 421, and cysteine 426. Residues 589–667 (ASDSYFAGKT…EARLISELKK (79 aa)) form the BRCT domain.

It belongs to the NAD-dependent DNA ligase family. LigA subfamily. It depends on Mg(2+) as a cofactor. Requires Mn(2+) as cofactor.

It carries out the reaction NAD(+) + (deoxyribonucleotide)n-3'-hydroxyl + 5'-phospho-(deoxyribonucleotide)m = (deoxyribonucleotide)n+m + AMP + beta-nicotinamide D-nucleotide.. In terms of biological role, DNA ligase that catalyzes the formation of phosphodiester linkages between 5'-phosphoryl and 3'-hydroxyl groups in double-stranded DNA using NAD as a coenzyme and as the energy source for the reaction. It is essential for DNA replication and repair of damaged DNA. The chain is DNA ligase from Bacillus licheniformis (strain ATCC 14580 / DSM 13 / JCM 2505 / CCUG 7422 / NBRC 12200 / NCIMB 9375 / NCTC 10341 / NRRL NRS-1264 / Gibson 46).